A 416-amino-acid polypeptide reads, in one-letter code: Maltoporin (416 aa).

An N-terminal signal peptide occupies residues 1-26; that stretch reads MELTMKKVSVIAAAVAATLAAGSAFA.

It belongs to the porin LamB (TC 1.B.3) family. Homotrimer formed of three 18-stranded antiparallel beta-barrels, containing three independent channels.

It localises to the cell outer membrane. The catalysed reaction is beta-maltose(in) = beta-maltose(out). Functionally, involved in the transport of maltose and maltodextrins. The chain is Maltoporin from Vibrio cholerae serotype O1 (strain ATCC 39541 / Classical Ogawa 395 / O395).